A 453-amino-acid polypeptide reads, in one-letter code: MGGEEGMAAGRKKRVGRYEVGRTIGQGTFAKVKFAVDADTGAAVAMKVLDKDTILNHRMLHQIKREISIMKIVRHPNIVRLNEVLAGKTKIYIILELITGGELFDKIARQGKLRENEARKYFQQLIDAINYCHSKGVYHRDLKPENLLLDSRGNLKVSDFGLSTLAQKGVGLLHTTCGTPNYVAPEVLSNNGYDGSAADVWSCGVILYVLMAGYLPFEEDDLPTLYDKITAGQFSCPYWFSPGATSLIHRILDPNPKTRITIEQIREDTWFKKTYVAIKRGEDENVDLDDVQAVFDNIEDKYVSEQVTHNDGGPLVMNAFEMITLSQGLDLSALFDRQQEFVKRQTRFVSRKPAKTIVATIEVVAETMGLKVHSQNYKLRLEGVSSNRMSPFAVVLQVFEVAPSLFMVDVRKVAGDTLEYHRFYKNLCNKMESIIWRPIEVSAKSALLRTATC.

One can recognise a Protein kinase domain in the interval Tyr-18–Phe-271. ATP is bound by residues Ile-24–Val-32 and Lys-47. Asp-141 (proton acceptor) is an active-site residue. The activation loop stretch occupies residues Asp-159–Glu-186. Residues Asn-310–Asp-336 enclose the NAF domain. The tract at residues Lys-343 to Val-372 is PPI.

It belongs to the protein kinase superfamily. CAMK Ser/Thr protein kinase family. SNF1 subfamily. As to quaternary structure, interacts with CBL4. Requires Mn(2+) as cofactor.

The enzyme catalyses L-seryl-[protein] + ATP = O-phospho-L-seryl-[protein] + ADP + H(+). The catalysed reaction is L-threonyl-[protein] + ATP = O-phospho-L-threonyl-[protein] + ADP + H(+). Involved in the regulatory pathway for the control of intracellular Na(+) and K(+) homeostasis and salt tolerance. Operates in synergy with CBL4 to activate the plasma membrane Na(+)/H(+) antiporter SOS1. CIPK serine-threonine protein kinases interact with CBL proteins. Binding of a CBL protein to the regulatory NAF domain of CIPK protein lead to the activation of the kinase in a calcium-dependent manner. The sequence is that of CBL-interacting protein kinase 24 (CIPK24) from Oryza sativa subsp. japonica (Rice).